Reading from the N-terminus, the 145-residue chain is uncharacterized protein (145 aa).

The protein belongs to the asfivirus K145R family.

It is found in the virion. This is an uncharacterized protein from African swine fever virus (isolate Pig/Kenya/KEN-50/1950) (ASFV).